A 326-amino-acid polypeptide reads, in one-letter code: Histone-lysine N-methyltransferase Suv4-20 (326 aa).

The region spanning 163-273 is the SET domain; it reads QECTRYSLEG…AGDEITCFYG (111 aa). Positions 294 to 313 are disordered; that stretch reads RGKFSTSDEEENDEPSALSE.

This sequence belongs to the class V-like SAM-binding methyltransferase superfamily. Histone-lysine methyltransferase family. Suvar4-20 subfamily.

The protein resides in the nucleus. Its subcellular location is the chromosome. It carries out the reaction N(6)-methyl-L-lysyl(20)-[histone H4] + S-adenosyl-L-methionine = N(6),N(6)-dimethyl-L-lysyl(20)-[histone H4] + S-adenosyl-L-homocysteine + H(+). It catalyses the reaction N(6),N(6)-dimethyl-L-lysyl(20)-[histone H4] + S-adenosyl-L-methionine = N(6),N(6),N(6)-trimethyl-L-lysyl(20)-[histone H4] + S-adenosyl-L-homocysteine + H(+). Its function is as follows. Histone methyltransferase that specifically di- and trimethylates 'Lys-20' of histone H4 (H4K20me2/me3). H4 'Lys-20' trimethylation represents a specific tag for epigenetic transcriptional repression. Contributes to dosage compensation of X chromosome-relative to autosome-linked gene expression, possibly by converting H4K20me1 to H4K20m2/me3 on autosomes. Involved in the regulation of growth and body fat metabolism downstream of the TOR complex 2 pathway. This chain is Histone-lysine N-methyltransferase Suv4-20, found in Caenorhabditis briggsae.